The sequence spans 503 residues: AMP phosphorylase (503 aa).

AMP-binding positions include G168, 194-199 (SRAITG), and S203. Residue D256 is the Proton donor of the active site. Positions 264 and 288 each coordinate AMP.

Belongs to the thymidine/pyrimidine-nucleoside phosphorylase family. Type 2 subfamily.

The catalysed reaction is AMP + phosphate = alpha-D-ribose 1,5-bisphosphate + adenine. The enzyme catalyses CMP + phosphate = cytosine + alpha-D-ribose 1,5-bisphosphate. It carries out the reaction UMP + phosphate = alpha-D-ribose 1,5-bisphosphate + uracil. Catalyzes the conversion of AMP and phosphate to adenine and ribose 1,5-bisphosphate (R15P). Exhibits phosphorylase activity toward CMP and UMP in addition to AMP. Functions in an archaeal AMP degradation pathway, together with R15P isomerase and RubisCO. The sequence is that of AMP phosphorylase from Methanocella arvoryzae (strain DSM 22066 / NBRC 105507 / MRE50).